A 299-amino-acid chain; its full sequence is MHPIRSVLIVTKPGHPTALDLAQDIGVWLTRRGVSCRILEGPGEALPLRQLAADAGLVLVLGGDGTMLGVARRLAGTGVPLLGINLGRVGFLAEVPAGEWAATLERLLAAPLRVERRLALRFGVERGGVEIFQGDAVNDVVINRGALARVITLDIDVDGERLAGLRADGLIISTPTGATGYAVSARGPLMDPALDAFTVTPICPFLGNFPPLVLGGGSVCSVRIREQGTEVHATIDGQEGIALRSGDRITLTGLRDGLCFATLGGGGYCARLRACGFVRDHACTLPDMLPDEGGTSTDV.

The active-site Proton acceptor is aspartate 64. Residues 64–65 (DG), 138–139 (ND), arginine 149, arginine 166, aspartate 168, 179–184 (TGYAVS), and glutamine 238 each bind NAD(+).

It belongs to the NAD kinase family. The cofactor is a divalent metal cation.

The protein resides in the cytoplasm. It carries out the reaction NAD(+) + ATP = ADP + NADP(+) + H(+). Its function is as follows. Involved in the regulation of the intracellular balance of NAD and NADP, and is a key enzyme in the biosynthesis of NADP. Catalyzes specifically the phosphorylation on 2'-hydroxyl of the adenosine moiety of NAD to yield NADP. This is NAD kinase from Nitratidesulfovibrio vulgaris (strain ATCC 29579 / DSM 644 / CCUG 34227 / NCIMB 8303 / VKM B-1760 / Hildenborough) (Desulfovibrio vulgaris).